The chain runs to 339 residues: Formyl peptide receptor-related sequence 6 (339 aa).

Residues 1–23 (MEANFSIPQNGSEVVFYDSTTSR) are Extracellular-facing. N-linked (GlcNAc...) asparagine glycans are attached at residues Asn-4 and Asn-10. A helical transmembrane segment spans residues 24-44 (VICIFLVVVLSITFLLGVIGN). The Cytoplasmic segment spans residues 45-62 (GLVIYVAGFRMTHTVTTI). The chain crosses the membrane as a helical span at residues 63–85 (CYLNLALSDFSYMASLPFQITSI). Residues 86-99 (VMNGEWLFGWFLCK) are Extracellular-facing. A disulfide bridge connects residues Cys-98 and Cys-178. Residues 100–120 (FVHMIINVNLFLSIFLITFIA) form a helical membrane-spanning segment. Over 121-144 (MDRCICVLHPVWAQNHRTVNVATK) the chain is Cytoplasmic. Residues 145–165 (VIFGAWILVLMLIFPHCIFVT) traverse the membrane as a helical segment. The Extracellular segment spans residues 166 to 198 (TVKDESGKVHCICNFESWAATPEEQVKVSMTVS). A helical membrane pass occupies residues 199–219 (LISVTISFIIGFSIPMIFIVI). The Cytoplasmic segment spans residues 220–241 (CYGLMAAKIGRRGFVNSSRPLR). The chain crosses the membrane as a helical span at residues 242–262 (VLTAVAISFFVCWFPFQLIFL). The Extracellular segment spans residues 263–280 (LGNIGNKETQNNIDTWVN). Residues 281–301 (TASTLASFNSCLNPILYVFLG) form a helical membrane-spanning segment. The Cytoplasmic portion of the chain corresponds to 302 to 339 (QQFRERLIYSLSASLERALREDSALNSDKTRNLSSQRL).

It belongs to the G-protein coupled receptor 1 family. In terms of tissue distribution, expressed exclusively in vomeronasal tissue. Expressed in 1.2 % of a subset of sensory neurons located in the apical layer of the vomeronasal organ. Each neuron appears to express only one receptor gene. Expressed in brain, spleen, skeletal muscle and at high level in testis.

The protein resides in the membrane. In terms of biological role, may have an olfactory function associated with the identification of pathogens or of pathogenic states. This Mus musculus (Mouse) protein is Formyl peptide receptor-related sequence 6 (Fpr-rs6).